The chain runs to 121 residues: MLPLTLLNATQGRPILVELKNGETFNGHLENCDNYMNLTLREVIRTMPDGDKFFRLPECYIRGNNIKYLRIQDEVLSQVAKQQAQQRENRGSRFRGRGQRGRGNYGHTAPNRRGRGRGGHM.

Residues 2-75 form the Sm domain; it reads LPLTLLNATQ…IKYLRIQDEV (74 aa). The disordered stretch occupies residues 82–121; that stretch reads QQAQQRENRGSRFRGRGQRGRGNYGHTAPNRRGRGRGGHM. Residues 110–121 show a composition bias toward basic residues; the sequence is PNRRGRGRGGHM.

This sequence belongs to the snRNP Sm proteins family. As to quaternary structure, component of the heptameric LSM1-LSM7 complex that forms a seven-membered ring structure with a donut shape. The LSm subunits are arranged in the order lsm1, lsm2, lsm3, lsm6, lsm5, lsm7 and lsm4. Component of the heptameric LSM2-LSM8 complex that forms a seven-membered ring structure with a donut shape. The LSm subunits are arranged in the order lsm8, lsm2, lsm3, lsm6, lsm5, lsm7 and lsm4.

It is found in the nucleus. Its subcellular location is the cytoplasm. Component of LSm protein complexes, which are involved in RNA processing and may function in a chaperone-like manner. Component of the cytoplasmic LSM1-LSM7 complex which is involved in mRNA degradation by activating the decapping step. The LSM1-LSM7 complex loads onto the 3'-end of single stranded RNA. Component of the nuclear LSM2-LSM8 complex, which is involved in spliceosome assembly. The LSM2-LSM8 complex plays a role in the biogenesis of the spliceosomal U4/U6-U5 tri-snRNP complex by accelerating prp24-mediated annealing of U4/U6 di-snRNA. The LSM2-LSM8 complex binds U6 snRNA terminating with a cyclic 2',3' phosphate group; RNA with an unmodified 3' hydroxyl or non-cyclic 3' phosphate is bound less tightly. The chain is LSM complex subunit lsm4 (lsm4) from Schizosaccharomyces pombe (strain 972 / ATCC 24843) (Fission yeast).